The following is a 301-amino-acid chain: Pseudouridine-5'-phosphate glycosidase (301 aa).

Glu-25 (proton donor) is an active-site residue. Substrate-binding residues include Lys-86 and Val-106. Asp-138 serves as a coordination point for Mn(2+). Residue 140–142 (SAD) coordinates substrate. Lys-159 (nucleophile) is an active-site residue.

This sequence belongs to the pseudouridine-5'-phosphate glycosidase family. Homotrimer. Requires Mn(2+) as cofactor.

It catalyses the reaction D-ribose 5-phosphate + uracil = psi-UMP + H2O. Functionally, catalyzes the reversible cleavage of pseudouridine 5'-phosphate (PsiMP) to ribose 5-phosphate and uracil. Functions biologically in the cleavage direction, as part of a pseudouridine degradation pathway. This chain is Pseudouridine-5'-phosphate glycosidase, found in Geobacillus kaustophilus (strain HTA426).